Here is a 496-residue protein sequence, read N- to C-terminus: GPI mannosyltransferase 4 (496 aa).

3 consecutive transmembrane segments (helical) span residues 5-25 (LIWL…YIHP), 56-73 (ARSY…FYLM), and 85-105 (ILRI…YYAL). N-linked (GlcNAc...) asparagine glycosylation occurs at Asn-156. 6 helical membrane-spanning segments follow: residues 174–194 (GFLI…LLLP), 207–227 (WIQM…IVYF), 261–281 (PRYT…LLMI), 286–306 (NDFL…LSAL), 311–328 (LRFL…LTRF), and 337–357 (IWLV…QGGV). A glycan (N-linked (GlcNAc...) asparagine) is linked at Asn-459.

This sequence belongs to the glycosyltransferase 22 family. PIGZ subfamily.

The protein localises to the endoplasmic reticulum membrane. The protein operates within glycolipid biosynthesis; glycosylphosphatidylinositol-anchor biosynthesis. In terms of biological role, alpha-1,2-mannosyltransferase involved in glycosylphosphatidylinositol-anchor biosynthesis. Transfers a fourth mannose to trimannosyl-GPIs during GPI precursor assembly. The presence of a fourth mannose in GPI is essential in fungi. In Candida glabrata (strain ATCC 2001 / BCRC 20586 / JCM 3761 / NBRC 0622 / NRRL Y-65 / CBS 138) (Yeast), this protein is GPI mannosyltransferase 4 (SMP3).